The sequence spans 101 residues: Small ribosomal subunit protein uS14 (101 aa).

Over residues 1–11 the composition is skewed to basic and acidic residues; the sequence is MAKKSAIETNE. The segment at 1–24 is disordered; the sequence is MAKKSAIETNERRRKLSQSKAAKR. Residues 12-24 are compositionally biased toward basic residues; that stretch reads RRRKLSQSKAAKR.

The protein belongs to the universal ribosomal protein uS14 family. In terms of assembly, part of the 30S ribosomal subunit. Contacts proteins S3 and S10.

Functionally, binds 16S rRNA, required for the assembly of 30S particles and may also be responsible for determining the conformation of the 16S rRNA at the A site. The protein is Small ribosomal subunit protein uS14 of Azorhizobium caulinodans (strain ATCC 43989 / DSM 5975 / JCM 20966 / LMG 6465 / NBRC 14845 / NCIMB 13405 / ORS 571).